Consider the following 5065-residue polypeptide: Dynein heavy chain-like protein 1 (5065 aa).

Residues 1–1957 (MELEKTHLIN…IIKMADATFE (1957 aa)) are stem. The stretch at 1677–1705 (QMEGFQKQLDRLSDSLSKIQKALGEYLEK) forms a coiled coil. The interval 1958-2179 (YGYEYLGMCE…LRSLKSVLNS (222 aa)) is AAA 1. 1996 to 2003 (GPAGTGKT) contacts ATP. Residues 2203-2223 (FNETLDNNNNNDNNNERKTTT) form a disordered region. Low complexity predominate over residues 2204 to 2215 (NETLDNNNNNDN). AAA regions lie at residues 2281 to 2632 (NEIH…YEYI), 2751 to 3004 (DVDR…WKLA), and 3097 to 3367 (IFNE…GNRY). Residue 2319-2326 (GDVGTGKS) coordinates ATP. A disordered region spans residues 2507 to 2529 (EKNQNGNENGNENEKKNINIINN). ATP is bound by residues 2790 to 2797 (GPPGSGKT) and 3135 to 3142 (GASGAGKT). The tract at residues 3386–3701 (IDEKKEEVSS…ETFINLEEAS (316 aa)) is stalk. 2 coiled-coil regions span residues 3388–3466 (EKKE…LDEQ) and 3970–3997 (TMEKLKVQGAEASKEVNIAEEVMVEVEN). AAA regions lie at residues 3754 to 3983 (LSRP…EASK) and 4289 to 4507 (FNKI…VVDS). A compositionally biased stretch (basic and acidic residues) spans 4686–4705 (KDKNKDEDKNKNKENDDNNK). The disordered stretch occupies residues 4686-4727 (KDKNKDEDKNKNKENDDNNKKHIGNNKLVISSSERTESETSE).

It belongs to the dynein heavy chain family. Consists of at least two heavy chains and a number of intermediate and light chains.

It localises to the cytoplasm. The protein localises to the cytoskeleton. Functionally, acts as a motor for the intracellular retrograde motility of vesicles and organelles along microtubules. Dynein has ATPase activity; the force-producing power stroke is thought to occur on release of ADP. This is Dynein heavy chain-like protein 1 from Plasmodium falciparum (isolate 3D7).